Consider the following 331-residue polypeptide: UDP-GalNAc:beta-1,3-N-acetylgalactosaminyltransferase 1 (331 aa).

Over 1 to 20 the chain is Cytoplasmic; the sequence is MAPAVLTAIPNRMSLRSLKW. The chain crosses the membrane as a helical; Signal-anchor for type II membrane protein span at residues 21–43; sequence SLLLLSLLSFLVIWYLSLPHYNV. The Lumenal portion of the chain corresponds to 44 to 331; it reads IERVNWMYFY…VMLRNTTCHY (288 aa). N-linked (GlcNAc...) asparagine glycans are attached at residues N72, N154, N198, N212, and N326.

It belongs to the glycosyltransferase 31 family. Mg(2+) serves as cofactor.

Its subcellular location is the golgi apparatus membrane. The enzyme catalyses a globoside Gb3Cer (d18:1(4E)) + UDP-N-acetyl-alpha-D-galactosamine = a globoside Gb4Cer (d18:1(4E)) + UDP + H(+). It participates in protein modification; protein glycosylation. Its function is as follows. Transfers N-acetylgalactosamine onto globotriaosylceramide. Plays a critical role in preimplantation stage embryonic development. The chain is UDP-GalNAc:beta-1,3-N-acetylgalactosaminyltransferase 1 (B3galnt1) from Rattus norvegicus (Rat).